Here is a 105-residue protein sequence, read N- to C-terminus: MSKQKELFANEEIAQAEKTKLQPPPMYKVVLNNDDYTPMEFVVEVLQKFFGMDLDKATQVMLSVHYSGKGVCGTFTAEIAETKVVQVNTYSRNNEHPLLCTMEKA.

It belongs to the ClpS family. Binds to the N-terminal domain of the chaperone ClpA.

Involved in the modulation of the specificity of the ClpAP-mediated ATP-dependent protein degradation. This is ATP-dependent Clp protease adapter protein ClpS from Aeromonas salmonicida (strain A449).